A 437-amino-acid polypeptide reads, in one-letter code: Peptidyl-prolyl cis-trans isomerase CYP38, chloroplastic (437 aa).

The transit peptide at 1 to 36 (MAAAFASLPTFSVVNSSRFPRRRIGFSCSKKPLEVR) directs the protein to the chloroplast. The N-terminal 56 residues, 37–92 (CSSGNTRYTKQRGAFTSLKECAISLALSVGLMVSVPSIALPPNAHAVANPVIPDVS), are a transit peptide targeting the thylakoid. Residues 245–437 (VKIKDNPNIE…LANPSYKIAG (193 aa)) enclose the PPIase cyclophilin-type domain.

As to expression, ubiquitous. Lower levels of expression in roots.

The protein resides in the plastid. It is found in the chloroplast thylakoid lumen. The enzyme catalyses [protein]-peptidylproline (omega=180) = [protein]-peptidylproline (omega=0). Functionally, required for the assembly and stabilization of PSII, but has no PPIases activity. The protein is Peptidyl-prolyl cis-trans isomerase CYP38, chloroplastic (CYP38) of Arabidopsis thaliana (Mouse-ear cress).